The following is an 88-amino-acid chain: Protein WIR1A (88 aa).

Over 1 to 13 (MASLGSSAGGRRP) the chain is Cytoplasmic. The helical transmembrane segment at 14–35 (TVLLQIALFVVVAAIIINSSVC) threads the bilayer. Residues 36 to 88 (LGATAVHDAAASGTGALDPNVPAVPTPGGAGQPYTGRGCRTVYGCRPPAGGQP) lie on the Extracellular side of the membrane.

The protein localises to the membrane. In terms of biological role, associated with pathogen defense. In Triticum aestivum (Wheat), this protein is Protein WIR1A (WIR1A).